We begin with the raw amino-acid sequence, 139 residues long: Small ribosomal subunit protein uS12 (139 aa).

Disordered stretches follow at residues 1–22 (MPTINQLVRKGRKSHKGKSKSP) and 37–57 (KTPSPQKRGVATRVGTMTPKK). Residues 9-19 (RKGRKSHKGKS) show a composition bias toward basic residues. A 3-methylthioaspartic acid modification is found at D102.

It belongs to the universal ribosomal protein uS12 family. Part of the 30S ribosomal subunit. Contacts proteins S8 and S17. May interact with IF1 in the 30S initiation complex.

With S4 and S5 plays an important role in translational accuracy. In terms of biological role, interacts with and stabilizes bases of the 16S rRNA that are involved in tRNA selection in the A site and with the mRNA backbone. Located at the interface of the 30S and 50S subunits, it traverses the body of the 30S subunit contacting proteins on the other side and probably holding the rRNA structure together. The combined cluster of proteins S8, S12 and S17 appears to hold together the shoulder and platform of the 30S subunit. This chain is Small ribosomal subunit protein uS12, found in Limosilactobacillus reuteri (strain DSM 20016) (Lactobacillus reuteri).